The chain runs to 300 residues: Iodotyrosine deiodinase (300 aa).

Residues 15–31 (VGLISVSIAAGVALGQL) form a helical membrane-spanning segment. Residues 110–114 (RRSVR), Ser138, and 138–139 (SG) each bind FMN. Positions 140, 167, 171, and 192 each coordinate 3,5-diiodo-L-tyrosine. 3-iodo-L-tyrosine contacts are provided by Ala140, Glu167, Tyr171, and Lys192. FMN contacts are provided by residues 247 to 249 (TTT) and Arg289.

The protein belongs to the nitroreductase family. FMN is required as a cofactor. May be cleaved at Gln-55. The cleaved form retains catalytic activity.

It localises to the membrane. It carries out the reaction 2 iodide + L-tyrosine + 2 NADP(+) = 3,5-diiodo-L-tyrosine + 2 NADPH + H(+). The enzyme catalyses iodide + L-tyrosine + NADP(+) = 3-iodo-L-tyrosine + NADPH. The catalysed reaction is 3-iodo-L-tyrosine + iodide + NADP(+) = 3,5-diiodo-L-tyrosine + NADPH + H(+). It catalyses the reaction L-tyrosine + chloride + NADP(+) = 3-chloro-L-tyrosine + NADPH. It carries out the reaction bromide + L-tyrosine + NADP(+) = 3-bromo-L-tyrosine + NADPH. Functionally, catalyzes the dehalogenation of halotyrosines such as 3,5-diiodo-L-tyrosine. Likely to also catalyze the dehalogenation of other halotyrosines such as 3-bromo-L-tyrosine, 3-chloro-L-tyrosine and 3-iodo-L-tyrosine. The polypeptide is Iodotyrosine deiodinase (Daphnia pulex (Water flea)).